The primary structure comprises 263 residues: Type-2Bb cytolytic delta-endotoxin (263 aa).

Belongs to the cyt1/cyt2 endotoxin family. Active after proteolytic processing.

Kills the larvae of dipteran insects by making pores in the epithelial cell membrane of the insect midgut. The polypeptide is Type-2Bb cytolytic delta-endotoxin (cyt2Bb1) (Bacillus thuringiensis subsp. jegathesan).